The chain runs to 492 residues: GTPase-GDP dissociation stimulator arz1 (492 aa).

The protein resides in the cytoplasm. Its subcellular location is the nucleus. In terms of biological role, probably acts as a GEF (guanine nucleotide exchange factor) for the Rho family of small GTP-binding proteins (G proteins) that stimulates the dissociation of GDP to enable subsequent binding of GTP. May also chaperone the processing and/or trafficking of small GTPases independently of GEF activity. May be involved in the control of polarized cell growth via CDC42-mediated signaling. May also be involved in the control of cell-wall organization via RHO1-mediated signaling. The chain is GTPase-GDP dissociation stimulator arz1 from Schizosaccharomyces pombe (strain 972 / ATCC 24843) (Fission yeast).